A 91-amino-acid chain; its full sequence is Elongation factor 1-beta (91 aa).

The protein belongs to the EF-1-beta/EF-1-delta family.

Its function is as follows. Promotes the exchange of GDP for GTP in EF-1-alpha/GDP, thus allowing the regeneration of EF-1-alpha/GTP that could then be used to form the ternary complex EF-1-alpha/GTP/AAtRNA. The protein is Elongation factor 1-beta of Metallosphaera sedula (strain ATCC 51363 / DSM 5348 / JCM 9185 / NBRC 15509 / TH2).